The following is a 219-amino-acid chain: Small ribosomal subunit protein uS3 (219 aa).

The region spanning 38-106 (VRKFVKTKLQ…QVAVNIVEVK (69 aa)) is the KH type-2 domain.

Belongs to the universal ribosomal protein uS3 family. Part of the 30S ribosomal subunit. Forms a tight complex with proteins S10 and S14.

In terms of biological role, binds the lower part of the 30S subunit head. Binds mRNA in the 70S ribosome, positioning it for translation. The sequence is that of Small ribosomal subunit protein uS3 from Desulfitobacterium hafniense (strain DSM 10664 / DCB-2).